Here is a 483-residue protein sequence, read N- to C-terminus: Lipoamide acyltransferase component of branched-chain alpha-keto acid dehydrogenase complex, mitochondrial (483 aa).

The N-terminal 75 residues, Met-1–Leu-75, are a transit peptide targeting the mitochondrion. Residues Ile-76–Ala-150 enclose the Lipoyl-binding domain. Lys-116 is subject to N6-lipoyllysine. One can recognise a Peripheral subunit-binding (PSBD) domain in the interval Leu-183–Ser-220. Active-site residues include His-453 and Asp-457.

This sequence belongs to the 2-oxoacid dehydrogenase family. As to quaternary structure, forms a 24-polypeptide structural core with octahedral symmetry. (R)-lipoate is required as a cofactor. Expressed in the non-photosynthetic organs such as siliques, flowers and roots.

The protein resides in the mitochondrion matrix. The catalysed reaction is N(6)-[(R)-dihydrolipoyl]-L-lysyl-[protein] + 2-methylpropanoyl-CoA = N(6)-[(R)-S(8)-2-methylpropanoyldihydrolipoyl]-L-lysyl-[protein] + CoA. Its function is as follows. The branched-chain alpha-keto dehydrogenase complex catalyzes the overall conversion of alpha-keto acids to acyl-CoA and CO(2). It contains multiple copies of three enzymatic components: branched-chain alpha-keto acid decarboxylase (E1), lipoamide acyltransferase (E2) and lipoamide dehydrogenase (E3). Within this complex, the catalytic function of this enzyme is to accept, and to transfer to coenzyme A, acyl groups that are generated by the branched-chain alpha-keto acid decarboxylase component. Required during sugar starvation and acts under the control of a sugar-sensing mechanism involving Ser/Thr kinases and phosphatases. The chain is Lipoamide acyltransferase component of branched-chain alpha-keto acid dehydrogenase complex, mitochondrial (BCE2) from Arabidopsis thaliana (Mouse-ear cress).